The chain runs to 302 residues: Syntaxin-17 (302 aa).

Ser2 carries the N-acetylserine modification. At 2 to 228 (SEDEEKVKLR…KNLGKAAKYK (227 aa)) the chain is on the cytoplasmic side. Lys41 is modified (N6-acetyllysine). Residues 53-123 (EEHINAGRTV…EELKKQFNDE (71 aa)) are a coiled coil. Position 157 is a phosphotyrosine; by ABL1 (Tyr157). Residues 162-224 (IPQDQNAAES…EEGTKNLGKA (63 aa)) form the t-SNARE coiled-coil homology domain. The chain crosses the membrane as a helical span at residues 229–249 (LAALPVAGALIGGMVGGPIGL). Positions 229–275 (LAALPVAGALIGGMVGGPIGLLAGFKVAGIAAALGGGVLGFTGGKLI) are necessary and sufficient for localization to autophagosome. The Lumenal segment spans residues 250 to 254 (LAGFK). A helical transmembrane segment spans residues 255-275 (VAGIAAALGGGVLGFTGGKLI). The Cytoplasmic portion of the chain corresponds to 276–302 (QRKKQKMMEKLTSSCPDLPSQTDKKCS). Ser289 is modified (phosphoserine). Positions 299-302 (KKCS) match the Endoplasmic reticulum retention signal motif.

The protein belongs to the syntaxin family. Forms a SNARE complex composed of VAMP8, SNAP29 and STX17 involved in fusion of autophagosome with lysosome. Interacts with VAMP7 and VTI1B. Probably interacts with BET1, SCFD1 and SEC22B. Interacts with PTPN2 and ABL1; involved in STX17 phosphorylation. Interacts with COPB1. Interacts with TMED9 and TMED10; the interaction is direct. Interacts with ATG14. Interacts with RUBCNL/PACER; promoting targeting of RUBCNL/PACER to autophagosome. Interacts with VAMP8, SNAP29, VPS39 and VPS41; these interactions are increased in the absence of TMEM39A. Interacts with IRGM; promoting STX17 recruitment to autophagosomes. Interacts with ATG8 proteins GABARAP and MAP1LC3B. Interacts with RNF115; this interaction enhances STX17 stability which in turn promotes autophagosome maturation. Interacts with RAB39A (GTP-bound); the interaction promotes autophagosome-lysosome membrane fusion driven by STX17-SNAP29-VAMP8. Interacts with RAB39B; the interaction may promote a different fonction in autophagy as compared with RAB39A. As to quaternary structure, (Microbial infection) The interactions with VAMP8, SNAP29 and VPS41 are decreased in presence of SARS coronavirus-2/SARS-CoV-2 ORF3A protein. Phosphorylated at Tyr-157 probably by ABL1. Dephosphorylation by PTPN2; regulates exit from the endoplasmic reticulum. Post-translationally, (Microbial infection) Cleaved by the L.pneumophila serine protease Lpg1137, impairing endoplasmic reticulum-mitochondria communication, leading to inhibit autophagy.

It localises to the endoplasmic reticulum membrane. The protein resides in the smooth endoplasmic reticulum membrane. The protein localises to the endoplasmic reticulum-Golgi intermediate compartment membrane. Its subcellular location is the cytoplasmic vesicle. It is found in the autophagosome membrane. It localises to the COPII-coated vesicle membrane. The protein resides in the cytoplasm. The protein localises to the cytosol. Its subcellular location is the mitochondrion membrane. It is found in the autolysosome membrane. Its function is as follows. SNAREs, soluble N-ethylmaleimide-sensitive factor-attachment protein receptors, are essential proteins for fusion of cellular membranes. SNAREs localized on opposing membranes assemble to form a trans-SNARE complex, an extended, parallel four alpha-helical bundle that drives membrane fusion. STX17 is a SNARE of the autophagosome involved in autophagy through the direct control of autophagosome membrane fusion with the lysosome membrane. May also play a role in the early secretory pathway where it may maintain the architecture of the endoplasmic reticulum-Golgi intermediate compartment/ERGIC and Golgi and/or regulate transport between the endoplasmic reticulum, the ERGIC and the Golgi. In Homo sapiens (Human), this protein is Syntaxin-17.